A 237-amino-acid polypeptide reads, in one-letter code: Demethylmenaquinone methyltransferase (237 aa).

Residues threonine 62, aspartate 80, 102–103 (DA), and serine 119 each bind S-adenosyl-L-methionine.

Belongs to the class I-like SAM-binding methyltransferase superfamily. MenG/UbiE family.

The catalysed reaction is a 2-demethylmenaquinol + S-adenosyl-L-methionine = a menaquinol + S-adenosyl-L-homocysteine + H(+). It functions in the pathway quinol/quinone metabolism; menaquinone biosynthesis; menaquinol from 1,4-dihydroxy-2-naphthoate: step 2/2. Its function is as follows. Methyltransferase required for the conversion of demethylmenaquinol (DMKH2) to menaquinol (MKH2). The protein is Demethylmenaquinone methyltransferase of Renibacterium salmoninarum (strain ATCC 33209 / DSM 20767 / JCM 11484 / NBRC 15589 / NCIMB 2235).